The sequence spans 255 residues: MTTQLSVNVNKIAVLRNSRGGTDPDVLQAARTCIAAGAHGITVHPRPDQRHIRAGDVLALSALTREHAVEFNIEGNPFAPPRAGYPGLLELCRATRPEQITLVPDGDGQLTSDHGFDFAQDTTQLAELIAAFKAVGSRVSLFVDAGNPDIAGAAALGADRVELYTGPYAHAHASGQTDTALALFADAGRRASAAGLGINAGHDLSQANLGDFLAAVPGVLEVSIGHALIGEALYQGLEATVRAYVDILRGSQVGA.

Residues asparagine 8 and arginine 19 each coordinate 3-amino-2-oxopropyl phosphate. Histidine 44 serves as the catalytic Proton acceptor. 1-deoxy-D-xylulose 5-phosphate is bound by residues arginine 46 and histidine 51. Glutamate 74 (proton acceptor) is an active-site residue. Position 111 (threonine 111) interacts with 1-deoxy-D-xylulose 5-phosphate. Residue histidine 202 is the Proton donor of the active site. 3-amino-2-oxopropyl phosphate contacts are provided by residues aspartate 203 and 225–226 (GH).

Belongs to the PNP synthase family. In terms of assembly, homooctamer; tetramer of dimers.

Its subcellular location is the cytoplasm. It catalyses the reaction 3-amino-2-oxopropyl phosphate + 1-deoxy-D-xylulose 5-phosphate = pyridoxine 5'-phosphate + phosphate + 2 H2O + H(+). Its pathway is cofactor biosynthesis; pyridoxine 5'-phosphate biosynthesis; pyridoxine 5'-phosphate from D-erythrose 4-phosphate: step 5/5. In terms of biological role, catalyzes the complicated ring closure reaction between the two acyclic compounds 1-deoxy-D-xylulose-5-phosphate (DXP) and 3-amino-2-oxopropyl phosphate (1-amino-acetone-3-phosphate or AAP) to form pyridoxine 5'-phosphate (PNP) and inorganic phosphate. In Xanthomonas oryzae pv. oryzae (strain PXO99A), this protein is Pyridoxine 5'-phosphate synthase.